The primary structure comprises 349 residues: Very-long-chain 3-oxoacyl-CoA reductase (349 aa).

Residues 29-49 (AASLVFATGGLFLLSRGLSFL) traverse the membrane as a helical segment. Residues leucine 74, aspartate 129, aspartate 137, asparagine 156, tyrosine 223, lysine 227, valine 256, and serine 258 each contribute to the NADP(+) site. The active-site Proton donor is tyrosine 223. Residue lysine 227 is the Lowers pKa of active site Tyr of the active site.

This sequence belongs to the short-chain dehydrogenases/reductases (SDR) family.

It localises to the endoplasmic reticulum membrane. The enzyme catalyses a very-long-chain (3R)-3-hydroxyacyl-CoA + NADP(+) = a very-long-chain 3-oxoacyl-CoA + NADPH + H(+). It participates in lipid metabolism; fatty acid biosynthesis. Component of the microsomal membrane bound fatty acid elongation system, which produces the 26-carbon very long-chain fatty acids (VLCFA) from palmitate. Catalyzes the reduction of the 3-ketoacyl-CoA intermediate that is formed in each cycle of fatty acid elongation. VLCFAs serve as precursors for ceramide and sphingolipids. This Coccidioides immitis (strain RS) (Valley fever fungus) protein is Very-long-chain 3-oxoacyl-CoA reductase.